The primary structure comprises 501 residues: Ammonium transporter 2 member 2 (501 aa).

A run of 11 helical transmembrane segments spans residues 35–55 (VAAT…YGSI), 64–84 (SAFM…LVGF), 140–160 (LVLF…GSLL), 174–194 (LWLL…GFLY), 203–223 (GGYV…YWVG), 238–258 (ILLM…FNGG), 274–294 (TNVS…IFFG), 298–318 (VIGA…GAGL), 322–342 (WSAM…MMIL), 356–376 (LAVF…TGLL), and 412–432 (FVTV…GLFI).

It belongs to the ammonia transporter channel (TC 1.A.11.2) family.

Its subcellular location is the membrane. Involved in ammonium transport. In Oryza sativa subsp. japonica (Rice), this protein is Ammonium transporter 2 member 2 (AMT2-2).